Consider the following 301-residue polypeptide: 4-hydroxy-tetrahydrodipicolinate synthase (301 aa).

Position 46 (threonine 46) interacts with pyruvate. Residue tyrosine 134 is the Proton donor/acceptor of the active site. The Schiff-base intermediate with substrate role is filled by lysine 162. Residue isoleucine 203 participates in pyruvate binding.

This sequence belongs to the DapA family. As to quaternary structure, homotetramer; dimer of dimers.

Its subcellular location is the cytoplasm. It carries out the reaction L-aspartate 4-semialdehyde + pyruvate = (2S,4S)-4-hydroxy-2,3,4,5-tetrahydrodipicolinate + H2O + H(+). The protein operates within amino-acid biosynthesis; L-lysine biosynthesis via DAP pathway; (S)-tetrahydrodipicolinate from L-aspartate: step 3/4. Functionally, catalyzes the condensation of (S)-aspartate-beta-semialdehyde [(S)-ASA] and pyruvate to 4-hydroxy-tetrahydrodipicolinate (HTPA). The polypeptide is 4-hydroxy-tetrahydrodipicolinate synthase (Anaplasma marginale (strain Florida)).